A 398-amino-acid chain; its full sequence is Probable purine permease 17 (398 aa).

Residues 1–26 (MEMSKASKQTTRHEESEHVQNPEPDQ) are disordered. Residues 11–20 (TRHEESEHVQ) are compositionally biased toward basic and acidic residues. The residue at position 29 (serine 29) is a Phosphoserine. Helical transmembrane passes span 43 to 63 (ISVS…MLLL), 88 to 108 (WTQA…FFIF), 127 to 147 (LFFL…LFAL), 155 to 175 (GIFS…TAII), 183 to 203 (WIII…PDFG), 219 to 239 (WLAF…QLGF), 258 to 278 (VLEM…VGLF), 301 to 321 (VLSL…MIGL), 332 to 352 (VVHM…FDFM), and 355 to 375 (VFSW…GSYF).

It belongs to the purine permeases (TC 2.A.7.14) family.

Its subcellular location is the membrane. This is Probable purine permease 17 (PUP17) from Arabidopsis thaliana (Mouse-ear cress).